We begin with the raw amino-acid sequence, 353 residues long: RNA 3'-terminal phosphate cyclase (353 aa).

ATP is bound by residues Q100 and 285–289 (HAADQ). The Tele-AMP-histidine intermediate role is filled by H311.

The protein belongs to the RNA 3'-terminal cyclase family. Type 1 subfamily.

It is found in the cytoplasm. The enzyme catalyses a 3'-end 3'-phospho-ribonucleotide-RNA + ATP = a 3'-end 2',3'-cyclophospho-ribonucleotide-RNA + AMP + diphosphate. Catalyzes the conversion of 3'-phosphate to a 2',3'-cyclic phosphodiester at the end of RNA. The mechanism of action of the enzyme occurs in 3 steps: (A) adenylation of the enzyme by ATP; (B) transfer of adenylate to an RNA-N3'P to produce RNA-N3'PP5'A; (C) and attack of the adjacent 2'-hydroxyl on the 3'-phosphorus in the diester linkage to produce the cyclic end product. The biological role of this enzyme is unknown but it is likely to function in some aspects of cellular RNA processing. This chain is RNA 3'-terminal phosphate cyclase, found in Nitrosospira multiformis (strain ATCC 25196 / NCIMB 11849 / C 71).